We begin with the raw amino-acid sequence, 1311 residues long: Clustered mitochondria protein homolog (1311 aa).

The span at 1 to 18 (MAEKTNGAAAPNGAADAP) shows a compositional bias: low complexity. The tract at residues 1 to 27 (MAEKTNGAAAPNGAADAPKSSPEQAQD) is disordered. A Clu domain is found at 324–568 (DITRTQESFL…RITPLDVSWQ (245 aa)). A TPR 1 repeat occupies 491 to 525 (IDYGAVDGKDLVATDERFVPQFQKLSKALKVKPHA). Residues 606 to 630 (SEVAKRGQAKKDQAAVEEKKEAKAE) are compositionally biased toward basic and acidic residues. 2 disordered regions span residues 606 to 694 (SEVA…SSDR) and 925 to 966 (PAPV…SSTI). The segment covering 631–661 (SEEDSDSSSEEESSSDESDSEESSSDEDEEE) has biased composition (acidic residues). The span at 665–675 (PKKKSVPKKAA) shows a compositional bias: basic residues. Residues 676-694 (KKEEVKEEKKDEKEASSDR) show a composition bias toward basic and acidic residues. TPR repeat units lie at residues 1034–1067 (ARVY…AERT), 1076–1109 (LLDY…WKII), and 1118–1151 (ITTI…CEVV). The segment covering 1276-1286 (LKFIEGTDKQK) has biased composition (basic and acidic residues). The segment at 1276–1311 (LKFIEGTDKQKKPAAKKRTGRANPKRRGAEPVSTKA) is disordered. Over residues 1287-1301 (KPAAKKRTGRANPKR) the composition is skewed to basic residues.

This sequence belongs to the CLU family. As to quaternary structure, may associate with the eukaryotic translation initiation factor 3 (eIF-3) complex.

It localises to the cytoplasm. In terms of biological role, mRNA-binding protein involved in proper cytoplasmic distribution of mitochondria. This chain is Clustered mitochondria protein homolog, found in Pyricularia oryzae (strain 70-15 / ATCC MYA-4617 / FGSC 8958) (Rice blast fungus).